The primary structure comprises 549 residues: Calcium-dependent protein kinase 5 (549 aa).

Residue Gly-2 is the site of N-myristoyl glycine attachment. Residues 43-69 (DEPAGKKAPRGSAAAADAPHAASMKRG) form a disordered region. A compositionally biased stretch (low complexity) spans 52-64 (RGSAAAADAPHAA). Residues 92 to 350 (YALGRKLGQG…AHEVLCHPWI (259 aa)) form the Protein kinase domain. Residues 98-106 (LGQGQFGTT) and Lys-121 each bind ATP. The Proton acceptor role is filled by Asp-216. Positions 356–386 (APDRPLDPAVLSRIKQFSAMNKLKKMALRVI) are autoinhibitory domain. EF-hand domains are found at residues 393–428 (EEIA…YGST), 429–464 (LKDT…LNKL), 465–500 (EREE…HNMP), and 501–534 (DAFL…GNMG). The Ca(2+) site is built by Asp-406, Asp-408, Ser-410, Glu-417, Asp-442, Asp-444, Ser-446, Thr-448, Glu-453, Asp-478, Asp-480, Ser-482, Tyr-484, Glu-489, Asp-512, Asp-514, Asp-516, Arg-518, and Glu-523.

It belongs to the protein kinase superfamily. Ser/Thr protein kinase family. CDPK subfamily.

The protein localises to the membrane. The catalysed reaction is L-seryl-[protein] + ATP = O-phospho-L-seryl-[protein] + ADP + H(+). It carries out the reaction L-threonyl-[protein] + ATP = O-phospho-L-threonyl-[protein] + ADP + H(+). Activated by calcium. Autophosphorylation may play an important role in the regulation of the kinase activity. Functionally, may play a role in signal transduction pathways that involve calcium as a second messenger. The protein is Calcium-dependent protein kinase 5 of Oryza sativa subsp. japonica (Rice).